A 149-amino-acid chain; its full sequence is MKALFLMGLLALVASAAFAQYGEVVGSYEGGAGGGGAQQCPLGTKLDSCRNYLLDRCTTMKDFPVTWRWWTWWKGGCEELLHDCCSQLSQMPPQCRCNIIQGSIQRDLGGFFGFQRDRTVKVIQAAKNLPPRCNQGPACNIPSTIGYYW.

Positions Met1–Ala19 are cleaved as a signal peptide. The propeptide occupies Gln20–Tyr28. The propeptide at Tyr148–Trp149 is removed in mature form.

In terms of processing, five disulfide bonds are present. As to expression, found in endosperm and aleurone layer of developing kernels, but not in the embryo.

It is found in the membrane. The protein localises to the secreted. It localises to the extracellular space. In terms of biological role, acts as a membranotoxin, probably through its antibacterial and antifungal activities, contributing to the defense mechanism of the plant against predators. Forms monovalent cation-selective ion channels in membranes. Contributes to grain texture and hardness. This is Hordoindoline-A (HINA) from Hordeum vulgare (Barley).